Consider the following 612-residue polypeptide: Threonine--tRNA ligase (612 aa).

A catalytic region spans residues 218–509; that stretch reads DHRKLGVELG…LSEHFGGNFP (292 aa). Zn(2+) is bound by residues cysteine 310, histidine 361, and histidine 486.

Belongs to the class-II aminoacyl-tRNA synthetase family. As to quaternary structure, homodimer. The cofactor is Zn(2+).

It localises to the cytoplasm. The enzyme catalyses tRNA(Thr) + L-threonine + ATP = L-threonyl-tRNA(Thr) + AMP + diphosphate + H(+). Functionally, catalyzes the attachment of threonine to tRNA(Thr) in a two-step reaction: L-threonine is first activated by ATP to form Thr-AMP and then transferred to the acceptor end of tRNA(Thr). Also edits incorrectly charged L-seryl-tRNA(Thr). The chain is Threonine--tRNA ligase from Helicobacter pylori (strain HPAG1).